The chain runs to 810 residues: Protein 4.1 (810 aa).

A disordered region spans residues 1–124 (MTTEKSLVAE…KEIEFGTSLD (124 aa)). Phosphoserine is present on S14. Phosphothreonine is present on T61. Over residues 62-76 (PTHEDLTKNKERTSE) the composition is skewed to basic and acidic residues. 10 positions are modified to phosphoserine: S85, S86, S96, S105, S122, S150, S152, S153, S189, and S192. Residues 102 to 118 (DVESAKEKCEGGQKEIE) are compositionally biased toward basic and acidic residues. Positions 152-203 (SSAETQPAQEEHREDPDFETKEGGGLEECSKIEVKEESPESKAERELKASQK) are disordered. The span at 160–200 (QEEHREDPDFETKEGGGLEECSKIEVKEESPESKAERELKA) shows a compositional bias: basic and acidic residues. Residues 211-492 (MHCKVSLLDD…EHHTFFRLTS (282 aa)) form the FERM domain. Y223 bears the Phosphotyrosine mark. T379 is modified (phosphothreonine). The disordered stretch occupies residues 518–613 (TRQASALIDR…DQAEPEPTEV (96 aa)). Residues S522, S541, S543, and S555 each carry the phosphoserine modification. Basic and acidic residues predominate over residues 587–601 (AQKETVKDEEKKEEG). Residues 615 to 659 (KDLDKSQEEIKKHHASISELKKNFMESVPEPRPSEWDKRLSTHSP) form a spectrin--actin-binding region. S620, S630, S655, and S658 each carry phosphoserine. The tract at residues 660–810 (FRTLNINGQL…VHQETEISEE (151 aa)) is C-terminal (CTD). A phosphothreonine mark is found at T682 and T805.

As to quaternary structure, binds with a high affinity to glycophorin and with lower affinity to band III protein. Associates with the nuclear mitotic apparatus. Binds calmodulin, CPAP and DLG1. Also found to associate with contractile apparatus and tight junctions. Interacts with NUMA1; this interaction is negatively regulated by CDK1 during metaphase and promotes for anaphase-specific localization of NUMA1 in symmetrically dividing cells. Interacts with ATP2B1; regulates small intestinal calcium absorption through regulation of membrane expression of ATP2B1. Post-translationally, O-glycosylated; contains N-acetylglucosamine side chains in the C-terminal domain. Phosphorylated at multiple sites by different protein kinases and each phosphorylation event selectively modulates the protein's functions.

It localises to the nucleus. The protein localises to the cytoplasm. Its subcellular location is the cytoskeleton. It is found in the cell cortex. In terms of biological role, protein 4.1 is a major structural element of the erythrocyte membrane skeleton. It plays a key role in regulating membrane physical properties of mechanical stability and deformability by stabilizing spectrin-actin interaction. Recruits DLG1 to membranes. Required for dynein-dynactin complex and NUMA1 recruitment at the mitotic cell cortex during anaphase. The chain is Protein 4.1 from Canis lupus familiaris (Dog).